A 240-amino-acid polypeptide reads, in one-letter code: 1-(5-phosphoribosyl)-5-[(5-phosphoribosylamino)methylideneamino] imidazole-4-carboxamide isomerase (240 aa).

Asp-8 serves as the catalytic Proton acceptor. Asp-129 (proton donor) is an active-site residue.

Belongs to the HisA/HisF family.

It localises to the cytoplasm. It catalyses the reaction 1-(5-phospho-beta-D-ribosyl)-5-[(5-phospho-beta-D-ribosylamino)methylideneamino]imidazole-4-carboxamide = 5-[(5-phospho-1-deoxy-D-ribulos-1-ylimino)methylamino]-1-(5-phospho-beta-D-ribosyl)imidazole-4-carboxamide. It participates in amino-acid biosynthesis; L-histidine biosynthesis; L-histidine from 5-phospho-alpha-D-ribose 1-diphosphate: step 4/9. This chain is 1-(5-phosphoribosyl)-5-[(5-phosphoribosylamino)methylideneamino] imidazole-4-carboxamide isomerase, found in Dinoroseobacter shibae (strain DSM 16493 / NCIMB 14021 / DFL 12).